Consider the following 590-residue polypeptide: MVLHQFDYLLAIGTIFAALDAWNIGANDVANSWATSVAARSVTYLQAMILGSIMEFAGSVGVGARVADTIRTKVVDTTLFADDPALLMLGMVCAVVASSIYLTMATRFGLPVSTTHSIMGGVIGMGIAAVGADGVQWVGSSINDGVVSVFLAWVIAPGLAGAFASIIFLVTKYGVLLRSNPVYKAFVMVPIYFGITAALLCMLLLWKGGSYKVTLTNPEIAGTIIGVGAAWALLVTIFLMPWLYRIVILEDWQLRFWHIPLGPLLLRRGEVPPPPADGSGVVQDFYAGRLTKEQLAARRAAQNGDSEMAAGAVTSSTSNPSAPTDGEKGATITKDDSSYSHDHSEPAQAAQPQIKTMVGPRPAGPWHSGAVLFWYVKWALFRGVDQDVLSSQQEKSVISSDVEELHAHATHYDNKTEYMYSFLQIMTAAAASFTHGANDIANAIGPYATVFQLWKDGALPEKGKADVPVWILVFGASCLVIGLWTYGYNIMRNLGNRITLQSPSRGFSMELGSAVTVILATRLKLPVSTTQCITGATVGVGLCSGTWRTINWRLVAWIYMGWFITLPVAGIISGCLMGIIINAPRWGYSG.

8 helical membrane passes run 6–26 (FDYL…NIGA), 44–64 (YLQA…GVGA), 85–105 (ALLM…LTMA), 118–138 (IMGG…VQWV), 149–169 (VFLA…IIFL), 186–206 (FVMV…LLLW), 220–240 (IAGT…IFLM), and 246–266 (IVIL…PLLL). Residues 267 to 466 (RRGEVPPPPA…GALPEKGKAD (200 aa)) are Cytoplasmic-facing. A disordered region spans residues 297–361 (ARRAAQNGDS…PQIKTMVGPR (65 aa)). Residues 313–322 (VTSSTSNPSA) show a composition bias toward polar residues. A compositionally biased stretch (basic and acidic residues) spans 325–345 (DGEKGATITKDDSSYSHDHSE). 4 helical membrane-spanning segments follow: residues 467-487 (VPVW…WTYG), 506-525 (GFSM…RLKL), 527-547 (VSTT…SGTW), and 561-581 (GWFI…GIII).

It belongs to the inorganic phosphate transporter (PiT) (TC 2.A.20) family.

The protein resides in the cell membrane. With respect to regulation, phosphate transport activity is competitively inhibited by vanadate and arsenate. High-affinity transporter for external inorganic phosphate. Acts probably as a sodium-phosphate symporter. Component of the high affinity phosphate transport system II (ptsII) necessary for scavenging phosphorus from the environment under conditions of limiting phosphorus. The protein is Phosphate-repressible phosphate permease pho-4 of Neurospora crassa (strain ATCC 24698 / 74-OR23-1A / CBS 708.71 / DSM 1257 / FGSC 987).